Here is a 480-residue protein sequence, read N- to C-terminus: uncharacterized protein (480 aa).

In terms of domain architecture, PUA spans 131-207; sequence KKIIKIKNDV…KVVKVRFFIK (77 aa).

In the C-terminal section; belongs to the PAPS reductase family.

This is an uncharacterized protein from Methanocaldococcus jannaschii (strain ATCC 43067 / DSM 2661 / JAL-1 / JCM 10045 / NBRC 100440) (Methanococcus jannaschii).